Consider the following 99-residue polypeptide: Small integral membrane protein 9 (99 aa).

A signal peptide spans 1-26 (MEPQKLLIIGFLLCSLTCLLLETVAS). Topologically, residues 27–73 (SPLPLSALGIQEKTGSKPRSGGNHRSWLNNFRDYLWQLIKSALPPAA) are extracellular. A helical membrane pass occupies residues 74 to 94 (IVAFLLTSALMGILCCFTILV). The Cytoplasmic portion of the chain corresponds to 95–99 (VDPVH).

It localises to the cell membrane. This chain is Small integral membrane protein 9 (SMIM9), found in Homo sapiens (Human).